A 687-amino-acid polypeptide reads, in one-letter code: Putative metabolite transport protein YDL199C (687 aa).

The tract at residues 1–22 is disordered; the sequence is MKPPLNMSRSNKPLTQEANSSA. The Extracellular segment spans residues 1 to 122; it reads MKPPLNMSRS…RHSSRVLRTS (122 aa). A compositionally biased stretch (polar residues) spans 7–22; it reads MSRSNKPLTQEANSSA. Serine 90 carries the post-translational modification Phosphoserine. A helical transmembrane segment spans residues 123-143; it reads FISFVVLVSSLSGLDQGLISG. Residues 144–164 are Cytoplasmic-facing; the sequence is NVMTLSFQKYFHYPLTSPLGN. Residues 165–185 traverse the membrane as a helical segment; sequence IVSIVNLGAFMASLFVYSGIL. At 186 to 192 the chain is on the extracellular side; sequence EPCSRKK. Residues 193 to 213 traverse the membrane as a helical segment; it reads MLQISTMIYSLGAIVQVLALN. Residues 214 to 216 are Cytoplasmic-facing; sequence QWC. The chain crosses the membrane as a helical span at residues 217-237; that stretch reads LLLGRFLLGVGMGFAFSMVII. Residues 238–251 lie on the Extracellular side of the membrane; it reads YQFEFPLPCIRKRT. The chain crosses the membrane as a helical span at residues 252–272; it reads LISIQCVSSVIAYSFGIWINC. The Cytoplasmic portion of the chain corresponds to 273–283; that stretch reads AFRYLGFAWRY. The helical transmembrane segment at 284-304 threads the bilayer; it reads PLSTHVALGIILNLMSFYLIL. The Extracellular segment spans residues 305–410; it reads ESPSWLLKQK…MGRGERKSIY (106 aa). A helical membrane pass occupies residues 411–431; it reads LTGLNALIYSIVILAYVPLVL. The Cytoplasmic portion of the chain corresponds to 432-439; it reads RKRKEKTN. The chain crosses the membrane as a helical span at residues 440 to 460; that stretch reads VLLGSIVMCALLFTISFTDWF. The Extracellular segment spans residues 461-469; that stretch reads PKSTTRYIS. Residues 470 to 490 form a helical membrane-spanning segment; that stretch reads ILFAVFLFTHFISWDSIGWVM. Over 491 to 500 the chain is Cytoplasmic; sequence TIELLPHLSQ. A helical membrane pass occupies residues 501-521; it reads APVILLVSNFYWIFKWFVSLI. At 522–533 the chain is on the extracellular side; sequence TPILIDRLSWKF. Residues 534-554 form a helical membrane-spanning segment; the sequence is YLIPSLSSFISIIFVLKIFPI. Topologically, residues 555–687 are cytoplasmic; it reads ETRDERLDSD…QNSPGDMAVA (133 aa). 2 disordered regions span residues 561–587 and 654–687; these read LDSD…SEFS and SFHN…MAVA. The segment covering 660 to 673 has biased composition (polar residues); it reads DPNISDNIAANKPS.

The protein belongs to the major facilitator superfamily. Sugar transporter (TC 2.A.1.1) family.

The protein resides in the membrane. This Saccharomyces cerevisiae (strain ATCC 204508 / S288c) (Baker's yeast) protein is Putative metabolite transport protein YDL199C.